Reading from the N-terminus, the 237-residue chain is Protein PetR (237 aa).

One can recognise a Response regulatory domain in the interval 8 to 121 (HLLIVDDDER…ELLLRINAIL (114 aa)). The residue at position 57 (Asp57) is a 4-aspartylphosphate. Positions 77–95 (ATPILLLTARGETRERIEG) form a DNA-binding region, H-T-H motif. A DNA-binding region (ompR/PhoB-type) is located at residues 132–236 (PKYLSLGPLR…VRGLGYMLAP (105 aa)).

Its function is as follows. Necessary for photosynthetic and respiratory growth. Probable promoter-specific protein mediating the interaction between DNA and RNA polymerase. The polypeptide is Protein PetR (petR) (Rhodobacter capsulatus (strain ATCC BAA-309 / NBRC 16581 / SB1003)).